Reading from the N-terminus, the 326-residue chain is Serpentine receptor class gamma-14 (326 aa).

7 consecutive transmembrane segments (helical) span residues 36-56 (QIIYIITGIFLNSAVLGTILW), 67-83 (FFTLFSVDCIANISILI), 115-135 (IIMLLTHHVSICKSLLQVLLV), 156-176 (LKYVISAVFLIPFCADWNIAI), 204-224 (FQLVFIIIALSFTFICTAITL), 243-263 (VIISIGFTFKVLFQIYYSFFF), and 274-294 (GFSFLALDFLTVGSPIVMICV).

It belongs to the nematode receptor-like protein srg family.

The protein localises to the membrane. The chain is Serpentine receptor class gamma-14 (srg-14) from Caenorhabditis elegans.